Consider the following 306-residue polypeptide: uncharacterized protein (306 aa).

This is an uncharacterized protein from Escherichia coli (strain K12).